Consider the following 440-residue polypeptide: Replication factor C large subunit (440 aa).

48–55 is a binding site for ATP; the sequence is GPPGVGKT.

This sequence belongs to the activator 1 small subunits family. RfcL subfamily. Heteromultimer composed of small subunits (RfcS) and large subunits (RfcL).

Part of the RFC clamp loader complex which loads the PCNA sliding clamp onto DNA. The polypeptide is Replication factor C large subunit (Sulfurisphaera tokodaii (strain DSM 16993 / JCM 10545 / NBRC 100140 / 7) (Sulfolobus tokodaii)).